The chain runs to 190 residues: Large ribosomal subunit protein uL6 (190 aa).

The protein belongs to the universal ribosomal protein uL6 family.

The sequence is that of Large ribosomal subunit protein uL6 (RpL9) from Drosophila melanogaster (Fruit fly).